A 153-amino-acid polypeptide reads, in one-letter code: Ribosome maturation factor RimP (153 aa).

The protein belongs to the RimP family.

The protein resides in the cytoplasm. Required for maturation of 30S ribosomal subunits. In Burkholderia pseudomallei (strain 1710b), this protein is Ribosome maturation factor RimP.